The primary structure comprises 283 residues: MAGNFWQSSHYLQWILDKQDLLKERQKDLKFLSEEEYWKLQIFFTNVIQALGEHLKLRQQVIATATVYFKRFYARYSLKSIDPVLMAPTCVFLASKVEEFGVVSNTRLIAAATSVLKTRFSYAFPKEFPYKMNHVLECEFYLLELMDCCLIVYHPYRPLLQYVQDMGQEDMLLPLAWRIVNDTYRTDLCLLYPPFMIALACLHVACVVQQKDARQWFAELSVDMEKILEIIRVILKLYEQWKNFDERKEMATILSKMPKPKPPPNSEGEQGPNGSQNSSYSQS.

Residues 46 to 144 (NVIQALGEHL…VLECEFYLLE (99 aa)) enclose the Cyclin N-terminal domain. Residues 252 to 283 (TILSKMPKPKPPPNSEGEQGPNGSQNSSYSQS) form a disordered region. Residues 272–283 (PNGSQNSSYSQS) are compositionally biased toward polar residues. Ser275 carries the phosphoserine modification.

It belongs to the cyclin family. Cyclin C subfamily. In terms of assembly, component of the Mediator complex, which is composed of MED1, MED4, MED6, MED7, MED8, MED9, MED10, MED11, MED12, MED13, MED13L, MED14, MED15, MED16, MED17, MED18, MED19, MED20, MED21, MED22, MED23, MED24, MED25, MED26, MED27, MED29, MED30, MED31, CCNC, CDK8 and CDC2L6/CDK11. The MED12, MED13, CCNC and CDK8 subunits form a distinct module termed the CDK8 module. Mediator containing the CDK8 module is less active than Mediator lacking this module in supporting transcriptional activation. Individual preparations of the Mediator complex lacking one or more distinct subunits have been variously termed ARC, CRSP, DRIP, PC2, SMCC and TRAP. The cylin/CDK pair formed by CCNC/CDK8 also associates with the large subunit of RNA polymerase II.

The protein localises to the nucleus. Its function is as follows. Component of the Mediator complex, a coactivator involved in regulated gene transcription of nearly all RNA polymerase II-dependent genes. Mediator functions as a bridge to convey information from gene-specific regulatory proteins to the basal RNA polymerase II transcription machinery. Mediator is recruited to promoters by direct interactions with regulatory proteins and serves as a scaffold for the assembly of a functional preinitiation complex with RNA polymerase II and the general transcription factors. Binds to and activates cyclin-dependent kinase CDK8 that phosphorylates the CTD (C-terminal domain) of the large subunit of RNA polymerase II (RNAp II), which may inhibit the formation of a transcription initiation complex. The protein is Cyclin-C (CCNC) of Bos taurus (Bovine).